Here is a 1038-residue protein sequence, read N- to C-terminus: Translation initiation factor IF-2 (1038 aa).

Residues 32–442 (GSALASLSDE…RKGVNTAAPR (411 aa)) form a disordered region. Composition is skewed to low complexity over residues 65-77 (PPTKDTPTAPVAP), 100-113 (PAEAADNPNAPAQP), and 131-147 (PKLAPAPEAKAPEAPAA). 2 stretches are compositionally biased toward basic and acidic residues: residues 204–217 (SGGRKAPESPKRES) and 275–295 (RSLDRSRNRPEEAAKAGDAGK). Residues 311 to 328 (PSAPAKPAAPTGSSGPAA) show a composition bias toward low complexity. The span at 331–344 (PDIKLTRDVIEGHK) shows a compositional bias: basic and acidic residues. Residues 422–435 (HHYRRSRPRIRRKG) are compositionally biased toward basic residues. One can recognise a tr-type G domain in the interval 529 to 696 (ARPPVVTFLG…TLLTIAELNE (168 aa)). Residues 538 to 545 (GHVDHGKT) form a G1 region. 538 to 545 (GHVDHGKT) is a GTP binding site. Positions 563-567 (GITQH) are G2. A G3 region spans residues 584 to 587 (DTPG). Residues 584–588 (DTPGH) and 638–641 (NKID) contribute to the GTP site. The tract at residues 638–641 (NKID) is G4. The G5 stretch occupies residues 674–676 (SAT).

It belongs to the TRAFAC class translation factor GTPase superfamily. Classic translation factor GTPase family. IF-2 subfamily.

The protein localises to the cytoplasm. Its function is as follows. One of the essential components for the initiation of protein synthesis. Protects formylmethionyl-tRNA from spontaneous hydrolysis and promotes its binding to the 30S ribosomal subunits. Also involved in the hydrolysis of GTP during the formation of the 70S ribosomal complex. The polypeptide is Translation initiation factor IF-2 (Rhodopirellula baltica (strain DSM 10527 / NCIMB 13988 / SH1)).